A 148-amino-acid polypeptide reads, in one-letter code: Large ribosomal subunit protein bL9 (148 aa).

Belongs to the bacterial ribosomal protein bL9 family.

Functionally, binds to the 23S rRNA. The protein is Large ribosomal subunit protein bL9 of Bacillus cereus (strain G9842).